The following is a 235-amino-acid chain: tRNA1(Val) (adenine(37)-N6)-methyltransferase (235 aa).

The protein belongs to the methyltransferase superfamily. tRNA (adenine-N(6)-)-methyltransferase family.

The protein localises to the cytoplasm. The catalysed reaction is adenosine(37) in tRNA1(Val) + S-adenosyl-L-methionine = N(6)-methyladenosine(37) in tRNA1(Val) + S-adenosyl-L-homocysteine + H(+). Specifically methylates the adenine in position 37 of tRNA(1)(Val) (anticodon cmo5UAC). This Flavobacterium johnsoniae (strain ATCC 17061 / DSM 2064 / JCM 8514 / BCRC 14874 / CCUG 350202 / NBRC 14942 / NCIMB 11054 / UW101) (Cytophaga johnsonae) protein is tRNA1(Val) (adenine(37)-N6)-methyltransferase.